Here is a 357-residue protein sequence, read N- to C-terminus: Protein MGF 360-8L (357 aa).

It belongs to the asfivirus MGF 360 family.

In terms of biological role, plays a role in virus cell tropism, and may be required for efficient virus replication in macrophages. The sequence is that of Protein MGF 360-8L from African swine fever virus (isolate Tick/South Africa/Pretoriuskop Pr4/1996) (ASFV).